The chain runs to 112 residues: Serum amyloid A protein (112 aa).

The residue at position 1 (Q1) is a Pyrrolidone carboxylic acid. The segment covering 75 to 86 (MTRDQVREDTKA) has biased composition (basic and acidic residues). The segment at 75–112 (MTRDQVREDTKADQFANEWGRSGKDPNHFRPPGLPDKY) is disordered.

Belongs to the SAA family. As to expression, expressed by the liver; secreted in plasma.

Its subcellular location is the secreted. Major acute phase reactant. Apolipoprotein of the HDL complex. The sequence is that of Serum amyloid A protein (SAA1) from Ovis aries (Sheep).